Consider the following 79-residue polypeptide: Putative membrane protein insertion efficiency factor (79 aa).

This sequence belongs to the UPF0161 family.

The protein localises to the cell inner membrane. Could be involved in insertion of integral membrane proteins into the membrane. In Prochlorococcus marinus (strain NATL1A), this protein is Putative membrane protein insertion efficiency factor.